The sequence spans 662 residues: MDDEQNVLATVWPEVIAELTTGSADGSIPAVTRAQQAWLKLVKPITVAQGFALLSVPSSLAQEAIERDLREPILRSLGRRLGPQVEGLGVRIAAPATPTAERAAANPRHARMTSRPERPRGERPVPGLPGQEAVDRPETLPRYSQAAESVPGYPARQDHSRPGDYPPAAEYTPAAEYTPAAEYTPAAEYSPEPEYTPATDYPGADDYPTTVFRLPPGGFAEPPGDGRPGGVPEISTPRRDGHGPRRDATPPGQEALFTPEPGDRPLRDTDRPLREPAAGHDVRESDGPVERDDEPVVNIRDSWPTYFAKNQESTPAPANSSASLNAKYTFETFVIGASNRFAHAAAVAIAEAPARAYNPLFVWGASGLGKTHLLHAAGHYAQRLFPGMRVKYVSTEEFTNDFINSLRDDRKVAFKRRYRETDILLVDDIQFIEGKEGIQEEFFHTFNTLHNANKQIVVSSDRPPKQLATLEERLRTRFEWGLITDVQPPELETRIAILRKKARMDRLDVPHDVLELIASRVERNIRELEGALIRVTAFASLNGQPLDLSLAEVVLRDLMPDTATLEINAATIMAVTAEYFNTTLEELTGPGKARPLAQARQIAMYLCRELTDLSLPKIGQAFGRDHTTVMYAEKKVRKEMTERRRVYDQVQELTARIKQRSR.

Residues 1 to 93 (MDDEQNVLAT…QVEGLGVRIA (93 aa)) are domain I, interacts with DnaA modulators. The interval 93-322 (AAPATPTAER…STPAPANSSA (230 aa)) is domain II. Residues 96-105 (ATPTAERAAA) are compositionally biased toward low complexity. The tract at residues 96 to 294 (ATPTAERAAA…SDGPVERDDE (199 aa)) is disordered. A compositionally biased stretch (basic and acidic residues) spans 114–123 (SRPERPRGER). Over residues 166 to 199 (PPAAEYTPAAEYTPAAEYTPAAEYSPEPEYTPAT) the composition is skewed to low complexity. Basic and acidic residues-rich tracts occupy residues 236–248 (TPRR…RRDA) and 261–290 (PGDR…GPVE). A domain III, AAA+ region region spans residues 323 to 539 (SLNAKYTFET…GALIRVTAFA (217 aa)). 4 residues coordinate ATP: Gly-367, Gly-369, Lys-370, and Thr-371. Residues 540 to 662 (SLNGQPLDLS…LTARIKQRSR (123 aa)) are domain IV, binds dsDNA.

This sequence belongs to the DnaA family. As to quaternary structure, oligomerizes as a right-handed, spiral filament on DNA at oriC.

Its subcellular location is the cytoplasm. Its function is as follows. Plays an essential role in the initiation and regulation of chromosomal replication. ATP-DnaA binds to the origin of replication (oriC) to initiate formation of the DNA replication initiation complex once per cell cycle. Binds the DnaA box (a 9 base pair repeat at the origin) and separates the double-stranded (ds)DNA. Forms a right-handed helical filament on oriC DNA; dsDNA binds to the exterior of the filament while single-stranded (ss)DNA is stabiized in the filament's interior. The ATP-DnaA-oriC complex binds and stabilizes one strand of the AT-rich DNA unwinding element (DUE), permitting loading of DNA polymerase. After initiation quickly degrades to an ADP-DnaA complex that is not apt for DNA replication. Binds acidic phospholipids. The protein is Chromosomal replication initiator protein DnaA of Nocardia farcinica (strain IFM 10152).